The following is a 678-amino-acid chain: Proprotein convertase subtilisin/kexin type 4 (678 aa).

The signal sequence occupies residues 1 to 26 (MRPSQTALWLGLVLSLALLAVGWASA). The propeptide occupies 27–110 (RPPIYVSSWA…QQTLRRRVKR (84 aa)). The Peptidase S8 domain maps to 123–437 (QWYMNKEIEQ…YGLLDAGLLV (315 aa)). Catalysis depends on charge relay system residues Asp-155, His-196, and Ser-370. Residues 446-580 (TKPQKKCTIR…TLLLYGTAED (135 aa)) form the P/Homo B domain. N-linked (GlcNAc...) asparagine glycosylation is present at Asn-472.

The protein belongs to the peptidase S8 family. Furin subfamily. The proPCSK4 form interacts with HSPA5; the interaction takes place at the endoplasmic reticulum. Post-translationally, N-glycosylated. Synthesized in the endoplasmic reticulum as a zymogen, is matured by autocatalytic cleavage between the prodomain and the catalytic domain. In terms of tissue distribution, expressed abundantly in the testis. High levels seen in germ cells but not in Leydig, Sertoli or peritubular cells. Expressed in the pachytene spermatocytes and the round spermatids but not in the elongating spermatids. May be expressed within hormonally stimulated ovaries.

It localises to the cytoplasmic vesicle. Its subcellular location is the secretory vesicle. The protein resides in the acrosome membrane. Proprotein convertase involved in the processing of hormone and other protein precursors at sites comprised of pairs of basic amino acid residues. In males, important for ADAM2 processing as well as other acrosomal proteins with roles in fertilization and critical for normal fertilization events such as sperm capacitation, acrosome reaction and binding of sperm to zona pellucida. Plays also a role in female fertility, involved in the regulation of trophoblast migration and placental development, may be through the proteolytical processing and activation of proteins such as IGF2. May also participate in folliculogenesis in the ovaries. The chain is Proprotein convertase subtilisin/kexin type 4 (Pcsk4) from Rattus norvegicus (Rat).